The primary structure comprises 215 residues: High mobility group protein B1 (215 aa).

1-10 (MGKGDPKKPR) contacts heparin. The interval 1 to 97 (MGKGDPKKPR…KFKDPNAPKR (97 aa)) is sufficient for interaction with HAVCR2. Lysine 3, lysine 7, lysine 8, and lysine 12 each carry N6-acetyllysine. The interval 3–15 (KGDPKKPRGKMSS) is LPS binding (delipidated). A DNA-binding region (HMG box 1) is located at residues 9-79 (PRGKMSSYAF…RYEREMKTYI (71 aa)). Cysteine 23 carries the post-translational modification Cysteine sulfonic acid (-SO3H); alternate. A disulfide bridge links cysteine 23 with cysteine 45. Residues 27 to 43 (HKKKHPDASVNFSEFSK) are NLS 1. Positions 27 to 43 (HKKKHPDASVNFSEFSK) match the Nuclear localization signal (NLS) 1 motif. 3 positions are modified to N6-acetyllysine: lysine 28, lysine 29, and lysine 30. An Isoglutamyl lysine isopeptide (Lys-Gln) (interchain with Q-?) cross-link involves residue lysine 28. Serine 35 bears the Phosphoserine mark. The residue at position 43 (lysine 43) is an N6-acetyllysine. Isoglutamyl lysine isopeptide (Lys-Gln) (interchain with Q-?) cross-links involve residues lysine 43 and lysine 44. Cysteine 45 is modified (cysteine sulfonic acid (-SO3H); alternate). Residue lysine 68 forms an Isoglutamyl lysine isopeptide (Lys-Gln) (interchain with Q-?) linkage. The interval 76 to 95 (KTYIPPKGETKKKFKDPNAP) is disordered. Residues 80 to 96 (PPKGETKKKFKDPNAPK) form an LPS binding (Lipid A) region. Over residues 83–94 (GETKKKFKDPNA) the composition is skewed to basic and acidic residues. Positions 89–108 (FKDPNAPKRPPSAFFLFCSE) are cytokine-stimulating activity. Lysine 90 is subject to N6-acetyllysine. The segment at residues 95–163 (PKRPPSAFFL…KYEKDIAAYR (69 aa)) is a DNA-binding region (HMG box 2). Serine 100 is subject to Phosphoserine. At cysteine 106 the chain carries Cysteine sulfonic acid (-SO3H). N6-acetyllysine is present on residues lysine 127, lysine 128, lysine 141, lysine 172, lysine 173, lysine 177, and lysine 180. A binding to AGER/RAGE region spans residues 150-183 (KLKEKYEKDIAAYRAKGKPDAAKKGVVKAEKSKK). The span at 161–179 (AYRAKGKPDAAKKGVVKAE) shows a compositional bias: basic and acidic residues. Residues 161-215 (AYRAKGKPDAAKKGVVKAEKSKKKKEEEDDEEDEEDEEEEEEEEDEDEEEDDDDE) form a disordered region. The segment at 178 to 184 (AEKSKKK) is NLS 2. The Nuclear localization signal (NLS) 2 signature appears at 178 to 184 (AEKSKKK). Residue lysine 180 forms an Isoglutamyl lysine isopeptide (Lys-Gln) (interchain with Q-?) linkage. ADP-ribosylserine is present on serine 181. N6-acetyllysine is present on residues lysine 182, lysine 183, lysine 184, and lysine 185. Isoglutamyl lysine isopeptide (Lys-Gln) (interchain with Q-?) cross-links involve residues lysine 182, lysine 183, and lysine 184. Positions 187–215 (EEDDEEDEEDEEEEEEEEDEDEEEDDDDE) are enriched in acidic residues.

Belongs to the HMGB family. As to quaternary structure, interacts (fully reduced HMGB1) with CXCL12; probably in a 1:2 ratio involving two molecules of CXCL12, each interacting with one HMG box of HMGB1; inhibited by glycyrrhizin. Associates with the TLR4:LY96 receptor complex. Component of the RAG complex composed of core components RAG1 and RAG2, and associated component HMGB1 or HMGB2. Interacts (in cytoplasm upon starvation) with BECN1; inhibits the interaction of BECN1 and BCL2 leading to promotion of autophagy. Interacts with KPNA1; involved in nuclear import. Interacts with SREBF1, TLR2, TLR4, TLR9, APEX1, FEN1, POLB, TERT. Interacts with AGER, PTPRZ1, IL1B, MSH2, XPA, XPC, HNF1A, TP53. Interacts with CD24; the probable CD24:SIGLEC10 complex is proposed to inhibit HGMB1-mediated tissue damage immune response. Interacts with THBD; prevents HGMB1 interaction with ACER/RAGE and inhibits HGMB1 pro-inflammatory activity. Interacts with HAVCR2; impairs HMGB1 binding to B-DNA and likely HMGB1-mediated innate immune response. Interacts with XPO1; mediating nuclear export. Interacts with receptor RAGE/AGER. Post-translationally, acetylated on multiple sites upon stimulation with LPS. Acetylation on lysine residues in the nuclear localization signals (NLS 1 and NLS 2) leads to cytoplasmic localization and subsequent secretion. Acetylation on Lys-3 results in preferential binding to DNA ends and impairs DNA bending activity. In terms of processing, phosphorylated at serine residues. Phosphorylation in both NLS regions is required for cytoplasmic translocation followed by secretion. Reduction/oxidation of cysteine residues Cys-23, Cys-45 and Cys-106 and a possible intramolecular disulfide bond involving Cys-23 and Cys-45 give rise to different redox forms with specific functional activities in various cellular compartments: 1- Fully reduced HGMB1 (HMGB1C23hC45hC106h), 2- Disulfide HMGB1 (HMGB1C23-C45C106h) and 3- Sulfonyl HMGB1 (HMGB1C23soC45soC106so). Post-translationally, poly-ADP-ribosylated by PARP1 when secreted following stimulation with LPS. In terms of processing, in vitro cleavage by CASP1 is liberating a HMG box 1-containing peptide which may mediate immunogenic activity; the peptide antagonizes apoptosis-induced immune tolerance. Can be proteolytically cleaved by a thrombin:thrombomodulin complex; reduces binding to heparin and pro-inflammatory activities. Forms covalent cross-links mediated by transglutaminase TGM2, between a glutamine and the epsilon-amino group of a lysine residue, forming homopolymers and heteropolymers. As to expression, serum levels are found elevated in mice with modeled systemic lupus erythematosus (SLE) and are correlated with SLE disease activity.

Its subcellular location is the nucleus. The protein resides in the cytoplasm. It localises to the chromosome. The protein localises to the cell membrane. It is found in the endosome. Its subcellular location is the endoplasmic reticulum-Golgi intermediate compartment. The protein resides in the secreted. Its function is as follows. Multifunctional redox sensitive protein with various roles in different cellular compartments. In the nucleus is one of the major chromatin-associated non-histone proteins and acts as a DNA chaperone involved in replication, transcription, chromatin remodeling, V(D)J recombination, DNA repair and genome stability. Proposed to be an universal biosensor for nucleic acids. Promotes host inflammatory response to sterile and infectious signals and is involved in the coordination and integration of innate and adaptive immune responses. In the cytoplasm functions as a sensor and/or chaperone for immunogenic nucleic acids implicating the activation of TLR9-mediated immune responses, and mediates autophagy. Acts as a danger associated molecular pattern (DAMP) molecule that amplifies immune responses during tissue injury. Released to the extracellular environment can bind DNA, nucleosomes, IL-1 beta, CXCL12, AGER isoform 2/sRAGE, lipopolysaccharide (LPS) and lipoteichoic acid (LTA), and activates cells through engagement of multiple surface receptors. In the extracellular compartment fully reduced HMGB1 (released by necrosis) acts as a chemokine, disulfide HMGB1 (actively secreted) as a cytokine, and sulfonyl HMGB1 (released from apoptotic cells) promotes immunological tolerance. Has proangiogenic activity. May be involved in platelet activation. Binds to phosphatidylserine and phosphatidylethanolamide. Bound to RAGE mediates signaling for neuronal outgrowth. May play a role in accumulation of expanded polyglutamine (polyQ) proteins. In terms of biological role, nuclear functions are attributed to fully reduced HGMB1. Associates with chromatin and binds DNA with a preference to non-canonical DNA structures such as single-stranded DNA, DNA-containing cruciforms or bent structures, supercoiled DNA and ZDNA. Can bent DNA and enhance DNA flexibility by looping thus providing a mechanism to promote activities on various gene promoters by enhancing transcription factor binding and/or bringing distant regulatory sequences into close proximity. May be involved in nucleotide excision repair (NER), mismatch repair (MMR) and base excision repair (BER) pathways, and double strand break repair such as non-homologous end joining (NHEJ). Involved in V(D)J recombination by acting as a cofactor of the RAG complex: acts by stimulating cleavage and RAG protein binding at the 23 bp spacer of conserved recombination signal sequences (RSS). In vitro can displace histone H1 from highly bent DNA. Can restructure the canonical nucleosome leading to relaxation of structural constraints for transcription factor-binding. Enhances binding of sterol regulatory element-binding proteins (SREBPs) such as SREBF1 to their cognate DNA sequences and increases their transcriptional activities. Facilitates binding of TP53 to DNA. Proposed to be involved in mitochondrial quality control and autophagy in a transcription-dependent fashion implicating HSPB1; however, this function has been questioned. Can modulate the activity of the telomerase complex and may be involved in telomere maintenance. In the cytoplasm proposed to dissociate the BECN1:BCL2 complex via competitive interaction with BECN1 leading to autophagy activation. Can protect BECN1 and ATG5 from calpain-mediated cleavage and thus proposed to control their proautophagic and proapoptotic functions and to regulate the extent and severity of inflammation-associated cellular injury. In myeloid cells has a protective role against endotoxemia and bacterial infection by promoting autophagy. Involved in endosomal translocation and activation of TLR9 in response to CpG-DNA in macrophages. Functionally, in the extracellular compartment (following either active secretion or passive release) involved in regulation of the inflammatory response. Fully reduced HGMB1 (which subsequently gets oxidized after release) in association with CXCL12 mediates the recruitment of inflammatory cells during the initial phase of tissue injury; the CXCL12:HMGB1 complex triggers CXCR4 homodimerization. Induces the migration of monocyte-derived immature dendritic cells and seems to regulate adhesive and migratory functions of neutrophils implicating AGER/RAGE and ITGAM. Can bind to various types of DNA and RNA including microbial unmethylated CpG-DNA to enhance the innate immune response to nucleic acids. Proposed to act in promiscuous DNA/RNA sensing which cooperates with subsequent discriminative sensing by specific pattern recognition receptors. Promotes extracellular DNA-induced AIM2 inflammasome activation implicating AGER/RAGE. Disulfide HMGB1 binds to transmembrane receptors, such as AGER/RAGE, TLR2, TLR4 and probably TREM1, thus activating their signal transduction pathways. Mediates the release of cytokines/chemokines such as TNF, IL-1, IL-6, IL-8, CCL2, CCL3, CCL4 and CXCL10. Promotes secretion of interferon-gamma by macrophage-stimulated natural killer (NK) cells in concert with other cytokines like IL-2 or IL-12. TLR4 is proposed to be the primary receptor promoting macrophage activation and signaling through TLR4 seems to implicate LY96/MD-2. In bacterial LPS- or LTA-mediated inflammatory responses binds to the endotoxins and transfers them to CD14 for signaling to the respective TLR4:LY96 and TLR2 complexes. Contributes to tumor proliferation by association with ACER/RAGE. Can bind to IL1-beta and signals through the IL1R1:IL1RAP receptor complex. Binding to class A CpG activates cytokine production in plasmacytoid dendritic cells implicating TLR9, MYD88 and AGER/RAGE and can activate autoreactive B cells. Via HMGB1-containing chromatin immune complexes may also promote B cell responses to endogenous TLR9 ligands through a B-cell receptor (BCR)-dependent and ACER/RAGE-independent mechanism. Inhibits phagocytosis of apoptotic cells by macrophages; the function is dependent on poly-ADP-ribosylation and involves binding to phosphatidylserine on the cell surface of apoptotic cells. In adaptive immunity may be involved in enhancing immunity through activation of effector T-cells and suppression of regulatory T (TReg) cells. In contrast, without implicating effector or regulatory T-cells, required for tumor infiltration and activation of T-cells expressing the lymphotoxin LTA:LTB heterotrimer thus promoting tumor malignant progression. Also reported to limit proliferation of T-cells. Released HMGB1:nucleosome complexes formed during apoptosis can signal through TLR2 to induce cytokine production. Involved in induction of immunological tolerance by apoptotic cells; its pro-inflammatory activities when released by apoptotic cells are neutralized by reactive oxygen species (ROS)-dependent oxidation specifically on Cys-106. During macrophage activation by activated lymphocyte-derived self apoptotic DNA (ALD-DNA) promotes recruitment of ALD-DNA to endosomes. This Mus musculus (Mouse) protein is High mobility group protein B1 (Hmgb1).